A 509-amino-acid polypeptide reads, in one-letter code: Heat shock 70 kDa protein 14 (509 aa).

Belongs to the heat shock protein 70 family. As to quaternary structure, component of ribosome-associated complex (RAC), a heterodimer composed of Hsp70/DnaK-type chaperone HSPA14 and Hsp40/DnaJ-type chaperone DNAJC2.

It is found in the cytoplasm. The protein resides in the cytosol. Functionally, component of the ribosome-associated complex (RAC), a complex involved in folding or maintaining nascent polypeptides in a folding-competent state. In the RAC complex, binds to the nascent polypeptide chain, while DNAJC2 stimulates its ATPase activity. The chain is Heat shock 70 kDa protein 14 (Hspa14) from Rattus norvegicus (Rat).